Here is a 446-residue protein sequence, read N- to C-terminus: Glycerol-3-phosphate acyltransferase 3 (446 aa).

The next 3 helical transmembrane spans lie at 11–31 (IFII…MFGS), 146–166 (LRVT…LLPL), and 168–188 (ITLA…VGQL). The short motif at 236 to 241 (HTSPID) is the HXXXXD motif element.

The protein belongs to the 1-acyl-sn-glycerol-3-phosphate acyltransferase family.

It is found in the endoplasmic reticulum membrane. The catalysed reaction is sn-glycerol 3-phosphate + an acyl-CoA = a 1-acyl-sn-glycero-3-phosphate + CoA. It catalyses the reaction a 1-acyl-sn-glycero-3-phosphate + an acyl-CoA = a 1,2-diacyl-sn-glycero-3-phosphate + CoA. The enzyme catalyses dodecanoyl-CoA + sn-glycerol 3-phosphate = 1-dodecanoyl-sn-glycerol 3-phosphate + CoA. It carries out the reaction sn-glycerol 3-phosphate + hexadecanoyl-CoA = 1-hexadecanoyl-sn-glycero-3-phosphate + CoA. The catalysed reaction is sn-glycerol 3-phosphate + (9Z)-octadecenoyl-CoA = 1-(9Z-octadecenoyl)-sn-glycero-3-phosphate + CoA. It catalyses the reaction (9Z,12Z)-octadecadienoyl-CoA + sn-glycerol 3-phosphate = 1-(9Z,12Z)-octadecadienoyl-sn-glycero-3-phosphate + CoA. The enzyme catalyses 1-tetradecanoyl-sn-glycerol 3-phosphate + (9Z)-octadecenoyl-CoA = 1-tetradecanoyl-2-(9Z)-octadecenoyl-sn-glycero-3-phosphate + CoA. It carries out the reaction 1-hexadecanoyl-sn-glycero-3-phosphate + (9Z)-octadecenoyl-CoA = 1-hexadecanoyl-2-(9Z-octadecenoyl)-sn-glycero-3-phosphate + CoA. The catalysed reaction is 1-(9Z-octadecenoyl)-sn-glycero-3-phosphate + (9Z)-octadecenoyl-CoA = 1,2-di-(9Z-octadecenoyl)-sn-glycero-3-phosphate + CoA. It catalyses the reaction 1-(6Z,9Z,12Z-octadecatrienoyl)-sn-glycero-3-phosphate + (9Z)-octadecenoyl-CoA = (6Z,9Z,12Z)-octadecatrienoyl-2-(9Z)-octadecenoyl-sn-glycero-3-phosphate + CoA. The enzyme catalyses 1-(9Z,12Z,15Z)-octadecatrienoyl-sn-glycero-3-phosphate + (9Z)-octadecenoyl-CoA = 1-(9Z,12Z,15Z)-octadecatrienoyl-2-(9Z)-octadecenoyl-sn-glycero-3-phosphate + CoA. It carries out the reaction 1-(9Z-octadecenoyl)-sn-glycero-3-phosphate + tetradecanoyl-CoA = 1-(9Z)-octadecenoyl-2-tetradecanoyl-sn-glycero-3-phosphate + CoA. The catalysed reaction is 1-(9Z-octadecenoyl)-sn-glycero-3-phosphate + hexadecanoyl-CoA = 1-(9Z)-octadecenoyl-2-hexadecanoyl-sn-glycero-3-phosphate + CoA. It catalyses the reaction 1-(9Z-octadecenoyl)-sn-glycero-3-phosphate + octadecanoyl-CoA = 1-(9Z-octadecenoyl)-2-octadecanoyl-sn-glycero-3-phosphate + CoA. The enzyme catalyses 1-(9Z-octadecenoyl)-sn-glycero-3-phosphate + (9Z,12Z)-octadecadienoyl-CoA = 1-(9Z)-octadecenoyl-2-(9Z,12Z)-octadecadienoyl-sn-glycero-3-phosphate + CoA. It carries out the reaction 1-(5Z,8Z,11Z,14Z-eicosatetraenoyl)-sn-glycero-3-phosphate + (9Z)-octadecenoyl-CoA = 1-(5Z,8Z,11Z,14Z)-eicosatetraenoyl-2-(9Z)-octadecenoyl-sn-glycero-3-phosphate + CoA. The protein operates within glycerolipid metabolism; triacylglycerol biosynthesis. Its pathway is phospholipid metabolism; CDP-diacylglycerol biosynthesis; CDP-diacylglycerol from sn-glycerol 3-phosphate: step 1/3. Functionally, converts glycerol-3-phosphate to 1-acyl-sn-glycerol-3-phosphate (lysophosphatidic acid or LPA) by incorporating an acyl moiety at the sn-1 position of the glycerol backbone. Also converts LPA into 1,2-diacyl-sn-glycerol-3-phosphate (phosphatidic acid or PA) by incorporating an acyl moiety at the sn-2 position of the glycerol backbone. Protects cells against lipotoxicity. This Xenopus laevis (African clawed frog) protein is Glycerol-3-phosphate acyltransferase 3.